Reading from the N-terminus, the 31-residue chain is Photosystem II reaction center protein T (31 aa).

Residues 3–23 (AIVYTFLLVGTLGIIFFAIFF) traverse the membrane as a helical segment.

It belongs to the PsbT family. As to quaternary structure, PSII is composed of 1 copy each of membrane proteins PsbA, PsbB, PsbC, PsbD, PsbE, PsbF, PsbH, PsbI, PsbJ, PsbK, PsbL, PsbM, PsbT, PsbY, PsbZ, Psb30/Ycf12, at least 3 peripheral proteins of the oxygen-evolving complex and a large number of cofactors. It forms dimeric complexes.

The protein localises to the plastid. The protein resides in the chloroplast thylakoid membrane. Functionally, found at the monomer-monomer interface of the photosystem II (PS II) dimer, plays a role in assembly and dimerization of PSII. PSII is a light-driven water plastoquinone oxidoreductase, using light energy to abstract electrons from H(2)O, generating a proton gradient subsequently used for ATP formation. This Ostreococcus tauri protein is Photosystem II reaction center protein T.